The following is an 817-amino-acid chain: MSKTEEPASGPPSKDRPEARAAWLRAELNRYAHEYYVLDQPSVPDVEYDRLYRELEALETEHPELKTPDSPTLRVGGAVLPEFAAVRHVIPMLSIRTETDTTANGARAFDASVRRELGLDDTDPPVEYAAELKFDGLAINLRYERGYLVQAATRGDGTTGEDVTQNIRTIRQIPLGLSPVDGHVPDVLEVRGEVYMRRDDFEKLNARQRERGDKTFVNPRNTAAGAVRQLDPKMAAERPLSFFAYGLGEVAGWKGMPGTHSSMLDVLQAFGFPVSNERAAVAGGEGLVRFHEAIRAKRDSLPFDIDGVVYKVNSLALQRELGFRSREPRWAVAHKYPAQEALTTVESIDVQVGRTGAITPVARLVPVFVGGVTVTNATLHNEDEVRRKDVRVGDTVIVRRAGDVIPEVVSVVLDRRPLDDVPGSDLFNPQQQPKYPPFELPKTCPVCGSHVVREEGEAVARCSGGLFCSAQRKEAIRHFAGRRMMDIEGLGERYIDNLVELDYVHGIADLYKLTLEDFLEMKRRADERDGVTPETVSAGKIATKWAENLLEGIQASKTPPLARFLFALGIRHVGESTAKTLADWLGSLAMIRRAPAPLLLALPDVGATVAEAIADFFAEPKNQQALDALLEAGVAPQGEHAPNAKLREKLEPAELYATLGVPKLTATRAKQLAVAAPTLAQLASVEPDQLAGLPADVTASLLEWLASHDHRAQLAKLDALRGELLAAMPAEAAEEGVLDGKTVVLTGTLPNLTRDEAKAMLEAAGAKVSGSVSKKTDYVVAGEDAGSKLAKAEELNVKVLDEAGMLALLKKPAGDQA.

NAD(+) is bound by residues 45-49 (DVEYD), 94-95 (SI), and glutamate 131. Lysine 133 serves as the catalytic N6-AMP-lysine intermediate. Arginine 154, glutamate 193, lysine 311, and lysine 335 together coordinate NAD(+). Zn(2+) contacts are provided by cysteine 444, cysteine 447, cysteine 462, and cysteine 468. The 85-residue stretch at 733–817 (AEEGVLDGKT…LLKKPAGDQA (85 aa)) folds into the BRCT domain.

Belongs to the NAD-dependent DNA ligase family. LigA subfamily. It depends on Mg(2+) as a cofactor. Mn(2+) serves as cofactor.

The enzyme catalyses NAD(+) + (deoxyribonucleotide)n-3'-hydroxyl + 5'-phospho-(deoxyribonucleotide)m = (deoxyribonucleotide)n+m + AMP + beta-nicotinamide D-nucleotide.. DNA ligase that catalyzes the formation of phosphodiester linkages between 5'-phosphoryl and 3'-hydroxyl groups in double-stranded DNA using NAD as a coenzyme and as the energy source for the reaction. It is essential for DNA replication and repair of damaged DNA. The protein is DNA ligase of Ralstonia pickettii (strain 12J).